The sequence spans 491 residues: NADH-quinone oxidoreductase subunit N (491 aa).

The next 14 membrane-spanning stretches (helical) occupy residues 6–26, 37–57, 69–89, 103–123, 128–148, 163–183, 206–226, 238–258, 273–293, 301–321, 335–355, 379–399, 413–433, and 458–478; these read TLAPVAPIIFLAIAIAAINWI, VAYPLSLLTTLVLTAWFGMNA, LVVIDPMANVLSAFCAAGLFV, MFAGEFYMLALFTLGGQIVMI, FLTLYLGLELLSLSSYALVAL, FVLGALASGFLLYGISMMYGA, LAFGVVFIVAGLSFKLGAAPF, PTAVTLLIAGGPKVAAFALFI, QMMLVVLSIISLAIGNLTAIV, LAYSTISHMGFVLLGLLSGVV, AMFYSVTYLLTTLGTFGIILL, FAFLMLVMMFSLAGIPPTVGF, GMTWLAVVAVLFSLIGAFYYL, and SMLSVNGAAVILLGLFPAALM.

It belongs to the complex I subunit 2 family. In terms of assembly, NDH-1 is composed of 14 different subunits. Subunits NuoA, H, J, K, L, M, N constitute the membrane sector of the complex.

It localises to the cell inner membrane. It carries out the reaction a quinone + NADH + 5 H(+)(in) = a quinol + NAD(+) + 4 H(+)(out). NDH-1 shuttles electrons from NADH, via FMN and iron-sulfur (Fe-S) centers, to quinones in the respiratory chain. The immediate electron acceptor for the enzyme in this species is believed to be ubiquinone. Couples the redox reaction to proton translocation (for every two electrons transferred, four hydrogen ions are translocated across the cytoplasmic membrane), and thus conserves the redox energy in a proton gradient. This Cupriavidus taiwanensis (strain DSM 17343 / BCRC 17206 / CCUG 44338 / CIP 107171 / LMG 19424 / R1) (Ralstonia taiwanensis (strain LMG 19424)) protein is NADH-quinone oxidoreductase subunit N.